Consider the following 80-residue polypeptide: Dolichol-phosphate mannose synthase subunit 2 (80 aa).

The next 2 helical transmembrane spans lie at 10-30 (LLLS…VIIL) and 50-70 (ILVP…FIGM).

The protein belongs to the DPM2 family. As to quaternary structure, component of the dolichol-phosphate mannose (DPM) synthase complex composed of DPMS1, DPMS2 and DPMS3; in the complex interacts directly with DPMS3. Associates with the GPI-GlcNAc transferase (GPI-GnT) complex.

It is found in the endoplasmic reticulum membrane. Its pathway is protein modification; protein glycosylation. Regulates the biosynthesis of dolichol phosphate-mannose. Regulatory subunit of the dolichol-phosphate mannose (DPM) synthase complex; essential for the ER localization and stable expression of DPMS1. The chain is Dolichol-phosphate mannose synthase subunit 2 from Arabidopsis thaliana (Mouse-ear cress).